We begin with the raw amino-acid sequence, 425 residues long: Threonylcarbamoyladenosine tRNA methylthiotransferase (425 aa).

Residues 60 to 295 (RKNELIEVLS…RSYTRYTDER (236 aa)) enclose the Radical SAM core domain. Residues cysteine 74, cysteine 78, and cysteine 81 each coordinate [4Fe-4S] cluster. In terms of domain architecture, TRAM spans 293-355 (DERIGELHRV…KFSMISKPAS (63 aa)). The helical transmembrane segment at 362–382 (PLSLMHLFPLAVFCLVLITLY) threads the bilayer.

This sequence belongs to the methylthiotransferase family. CDKAL1 subfamily. [4Fe-4S] cluster is required as a cofactor.

The protein localises to the membrane. It catalyses the reaction N(6)-L-threonylcarbamoyladenosine(37) in tRNA + (sulfur carrier)-SH + AH2 + 2 S-adenosyl-L-methionine = 2-methylsulfanyl-N(6)-L-threonylcarbamoyladenosine(37) in tRNA + (sulfur carrier)-H + 5'-deoxyadenosine + L-methionine + A + S-adenosyl-L-homocysteine + 2 H(+). Functionally, catalyzes the methylthiolation of N6-threonylcarbamoyladenosine (t(6)A), leading to the formation of 2-methylthio-N6-threonylcarbamoyladenosine (ms(2)t(6)A) at position 37 in tRNAs that read codons beginning with adenine. The chain is Threonylcarbamoyladenosine tRNA methylthiotransferase from Caenorhabditis elegans.